We begin with the raw amino-acid sequence, 472 residues long: Serralysin A (472 aa).

Positions 1-17 (MEKNLSSRDDDALHSLS) are excised as a propeptide. H186 provides a ligand contact to Zn(2+). The active site involves E187. Residues H190 and Y221 each coordinate Zn(2+). Positions 258, 260, 262, 290, 292, 293, 332, 334, 339, 341, 343, 348, 350, 352, 356, 357, 358, 359, 361, 365, 366, 367, 368, 370, 374, 375, 377, 379, 388, 395, and 405 each coordinate Ca(2+). 2 Hemolysin-type calcium-binding repeats span residues 337–354 (IGGSGNDLLIGNNADNIL) and 355–372 (RGGAGDDILYGGGGADRL).

This sequence belongs to the peptidase M10B family. Ca(2+) is required as a cofactor. The cofactor is Zn(2+).

Its subcellular location is the secreted. The catalysed reaction is Preferential cleavage of bonds with hydrophobic residues in P1'.. The polypeptide is Serralysin A (prtA) (Dickeya chrysanthemi (Pectobacterium chrysanthemi)).